The chain runs to 192 residues: Sporulation initiation phosphotransferase B (192 aa).

Histidine 30 is subject to Phosphohistidine.

Homodimer. Dimerization is essential for activity as both monomers contribute to the formation of the active site. In terms of processing, phosphorylated by spo0F.

The protein resides in the cytoplasm. Its function is as follows. Key element in the phosphorelay regulating sporulation initiation. Acts on spo0A. Mediates reversible phosphoryl transfer from spo0F to spo0A. This is Sporulation initiation phosphotransferase B (spo0B) from Bacillus subtilis (strain 168).